Here is a 204-residue protein sequence, read N- to C-terminus: MVKLKICGNATLSDIIEFSKLDVDYLGIITDVVSQRFVKSEFLTFVKRYVEKPIVNVKVNVQISEIERELLVSDYFQIHRVLDDSELELLKSYDFRKRIILYVPASFEYKKYLERAIDTVDMVLVDSVKKGVGVDYNVVSSFLKDYPYLGVGGKISIDNISNFIDLNPAWLDISSSIEIYPGKKDINMVKKIVEVVKYGSSSNK.

This sequence belongs to the TrpF family.

It carries out the reaction N-(5-phospho-beta-D-ribosyl)anthranilate = 1-(2-carboxyphenylamino)-1-deoxy-D-ribulose 5-phosphate. Its pathway is amino-acid biosynthesis; L-tryptophan biosynthesis; L-tryptophan from chorismate: step 3/5. This chain is N-(5'-phosphoribosyl)anthranilate isomerase (trpF), found in Saccharolobus solfataricus (strain ATCC 35092 / DSM 1617 / JCM 11322 / P2) (Sulfolobus solfataricus).